Reading from the N-terminus, the 57-residue chain is Major exported protein (57 aa).

This sequence belongs to the hcp1 family. As to quaternary structure, homodimer.

The protein localises to the secreted. The polypeptide is Major exported protein (Pseudomonas syringae pv. ribicola).